The sequence spans 439 residues: Ribosomal protein uS12 methylthiotransferase RimO (439 aa).

Residues P5–P115 enclose the MTTase N-terminal domain. The [4Fe-4S] cluster site is built by C14, C50, C79, C146, C150, and C153. A Radical SAM core domain is found at L132–R369. In terms of domain architecture, TRAM spans K372 to G438.

This sequence belongs to the methylthiotransferase family. RimO subfamily. Requires [4Fe-4S] cluster as cofactor.

It is found in the cytoplasm. The catalysed reaction is L-aspartate(89)-[ribosomal protein uS12]-hydrogen + (sulfur carrier)-SH + AH2 + 2 S-adenosyl-L-methionine = 3-methylsulfanyl-L-aspartate(89)-[ribosomal protein uS12]-hydrogen + (sulfur carrier)-H + 5'-deoxyadenosine + L-methionine + A + S-adenosyl-L-homocysteine + 2 H(+). In terms of biological role, catalyzes the methylthiolation of an aspartic acid residue of ribosomal protein uS12. In Bradyrhizobium diazoefficiens (strain JCM 10833 / BCRC 13528 / IAM 13628 / NBRC 14792 / USDA 110), this protein is Ribosomal protein uS12 methylthiotransferase RimO.